The chain runs to 178 residues: MLHIEFITDLGAKVTVDVESADKLLDVQRQYGRLGWTSGEVPVGGYQFPLENEPDFDWSLIGARKWTNPEGEEMILHRGHAYRRRELEAVDSRKMKLPAAVKYSRGAKNTDPEHVREKADGEFEYVTLAIFRGGKRQERYAVPGSNRPQAGAPARSAATRAQGARPGAVAVQDEETPF.

Residues 139-178 are disordered; sequence RYAVPGSNRPQAGAPARSAATRAQGARPGAVAVQDEETPF. Low complexity predominate over residues 147-165; sequence RPQAGAPARSAATRAQGAR.

Homopentamer; arranged in a ring-structure.

SsDNA-binding protein that probably contributes to the ionizing radiation resistance of D.geothermalis. Plays a role in DNA repair and genome reconstitution, in a RecA-independent process, and is necessary for recovery from severe genomic fragmentation as a result of exposure to severe levels of ionizing radiation. Binds single-stranded DNA but not duplex DNA. The chain is Single-stranded DNA-binding protein DdrB (ddrB) from Deinococcus geothermalis (strain DSM 11300 / CIP 105573 / AG-3a).